A 110-amino-acid chain; its full sequence is Glycine-rich selenoprotein (110 aa).

Over 1 to 20 (MVYIDHNGRVWEKRPWDWRR) the chain is Lumenal. Residues 21–41 (IVELFVGIWFAIKQLFLTFLA) form a helical; Signal-anchor for type III membrane protein membrane-spanning segment. Residues 42-110 (PFTGNNNQAN…CNMPAGGGUG (69 aa)) lie on the Cytoplasmic side of the membrane. The disordered stretch occupies residues 51–110 (NPRRGNGWGGGGGWGGGGGGGGGGGGGRPGSGSGGLRPNRRIGRIQPTMSCNMPAGGGUG). Residues 56–85 (NGWGGGGGWGGGGGGGGGGGGGRPGSGSGG) show a composition bias toward gly residues. Sec109 is a non-standard amino acid (selenocysteine).

The protein localises to the golgi apparatus membrane. Plays a role in the life span. May be involved in regulating the redox state of the cell and possesses anticarcinogenic properties. The chain is Glycine-rich selenoprotein (SelG) from Drosophila melanogaster (Fruit fly).